The chain runs to 131 residues: MSWQAYVDDHLMCEIEGHHLTSAAIIGHDGTVWAQSAAFPAFKPEEMANIMKDFDEPGFLAPTGLFLGPTKYMVIQGEPGAVIRGKKGSGGVTVKKTGQALVIGIYDEPMTPGQCNMVIEKLGDYLIEQGM.

This sequence belongs to the profilin family. In terms of assembly, occurs in many kinds of cells as a complex with monomeric actin in a 1:1 ratio.

The protein resides in the cytoplasm. It localises to the cytoskeleton. Its function is as follows. Binds to actin and affects the structure of the cytoskeleton. At high concentrations, profilin prevents the polymerization of actin, whereas it enhances it at low concentrations. By binding to PIP2, it inhibits the formation of IP3 and DG. In Cynodon dactylon (Bermuda grass), this protein is Profilin (PRO1).